Here is an 814-residue protein sequence, read N- to C-terminus: MRVSLSWLKQLVQVTDSVEALAHRLSMAGFEEEEIEDLSARAKGVVVGFVKDREKHPNADKLSVCQVDIGSEESIQIVCGAKNVRAGLHVPVAMVGAELPAVNLTIKSGELRGVSSNGMICSLSELGLATESDGIAELDALTDELPALGAPVAPMLGLDDTVLELAITANRPDGLSMVGIAREVAALTGSALTLPVLTLKPAHELLQASAASAEAMQAGGLYGITLIEGVDGSQVSPTWVQQRLERAGINRVNAVVDITNVVMLEQGQPLHAFDADALEQLTGKPVNAASFGLRQAREGEAFIGLDGRELSLVARAQVVTCHDLPIALAGVMGSKASGVTAATGRIWLESAMFSPAAVRTTARSVGLRTDASARFEKGLPKEMTLACSIRALELLKELFPCEAKGLWVCGDSAADASSVLLRRNALHQLLGPIEDEEGSSDLADAVVEQCLTALGSELSPSDEGWNVIAPPSRRLDLAREIDLIEEVARLVGFDRFGAHLPDPLAPGALTPAQQAERRLRTLFCGAGLQEITTLSLVSASDSDPRIAISNPLLAETSHLRTNLWEEHLAVCVRNLKASQPGCWIFELGTTYAGSADAVEESRLLSGVICGEQRLERWTTSGKPAPPDYYAARGRLTEVMQALKLDVSDRRLTDDSRLHPGRAATLVLEGRPLGCFGQLHPELAASQNLPEATFLFELDLTRLVESATRRNRWVPAFKAFPTVPASERDLAVVVDRSQAASDLMQSIRKAGKPLLEAVTLIDRFEGDQLGENKASQAFRLRYRHQSETLTDDQVQPVHDKVRNALVKQHGAELRS.

A tRNA-binding domain is found at 39-153; the sequence is SARAKGVVVG…ELPALGAPVA (115 aa). The B5 domain maps to 414-498; sequence ADASSVLLRR…RLVGFDRFGA (85 aa). Positions 476, 482, 485, and 486 each coordinate Mg(2+). Positions 720–813 constitute an FDX-ACB domain; sequence PTVPASERDL…LVKQHGAELR (94 aa).

The protein belongs to the phenylalanyl-tRNA synthetase beta subunit family. Type 1 subfamily. Tetramer of two alpha and two beta subunits. Mg(2+) serves as cofactor.

It localises to the cytoplasm. It carries out the reaction tRNA(Phe) + L-phenylalanine + ATP = L-phenylalanyl-tRNA(Phe) + AMP + diphosphate + H(+). The protein is Phenylalanine--tRNA ligase beta subunit of Parasynechococcus marenigrum (strain WH8102).